A 156-amino-acid chain; its full sequence is D-aminoacyl-tRNA deacylase (156 aa).

A Gly-cisPro motif, important for rejection of L-amino acids motif is present at residues 142–143 (GP).

Belongs to the DTD family. Homodimer.

The protein resides in the cytoplasm. It catalyses the reaction glycyl-tRNA(Ala) + H2O = tRNA(Ala) + glycine + H(+). The catalysed reaction is a D-aminoacyl-tRNA + H2O = a tRNA + a D-alpha-amino acid + H(+). In terms of biological role, an aminoacyl-tRNA editing enzyme that deacylates mischarged D-aminoacyl-tRNAs. Also deacylates mischarged glycyl-tRNA(Ala), protecting cells against glycine mischarging by AlaRS. Acts via tRNA-based rather than protein-based catalysis; rejects L-amino acids rather than detecting D-amino acids in the active site. By recycling D-aminoacyl-tRNA to D-amino acids and free tRNA molecules, this enzyme counteracts the toxicity associated with the formation of D-aminoacyl-tRNA entities in vivo and helps enforce protein L-homochirality. This Cupriavidus pinatubonensis (strain JMP 134 / LMG 1197) (Cupriavidus necator (strain JMP 134)) protein is D-aminoacyl-tRNA deacylase.